An 826-amino-acid polypeptide reads, in one-letter code: (2S)-3-sulfopropanediol dehydratase (826 aa).

The 663-residue stretch at Pro33–Lys695 folds into the PFL domain. The active-site Cysteine radical intermediate is Cys464. Glu466 serves as the catalytic Proton acceptor. The Glycine radical domain occupies Pro706 to Phe826. At Gly802 the chain carries Glycine radical.

The protein belongs to the glycyl radical enzyme (GRE) family. Requires the activating protein HpfH to generate the key active site glycyl radical on Gly-802 that is involved in catalysis.

It carries out the reaction (2S)-3-sulfopropanediol = 3-oxopropane-1-sulfonate + H2O. The protein operates within organosulfur degradation; alkanesulfonate degradation. Functionally, involved in the degradation of the organosulfur compound 2(S)-dihydroxypropanesulfonate (DHPS). Catalyzes the radical-mediated dehydration of DHPS to produce 3-sulfopropionaldehyde (3-oxopropane-1-sulfonate). The polypeptide is (2S)-3-sulfopropanediol dehydratase (Klebsiella oxytoca).